Here is a 251-residue protein sequence, read N- to C-terminus: Hydroxyacylglutathione hydrolase (251 aa).

Residues H53, H55, D57, H58, H110, D127, and H165 each contribute to the Zn(2+) site.

The protein belongs to the metallo-beta-lactamase superfamily. Glyoxalase II family. As to quaternary structure, monomer. Zn(2+) serves as cofactor.

The enzyme catalyses an S-(2-hydroxyacyl)glutathione + H2O = a 2-hydroxy carboxylate + glutathione + H(+). Its pathway is secondary metabolite metabolism; methylglyoxal degradation; (R)-lactate from methylglyoxal: step 2/2. Functionally, thiolesterase that catalyzes the hydrolysis of S-D-lactoyl-glutathione to form glutathione and D-lactic acid. The polypeptide is Hydroxyacylglutathione hydrolase (Shigella boydii serotype 4 (strain Sb227)).